The primary structure comprises 509 residues: Lysophospholipid acyltransferase (509 aa).

Over 1-14 the chain is Lumenal; it reads MAYLIDIPFEYFSS. The chain crosses the membrane as a helical span at residues 15-35; that stretch reads FLGVHPDQLKLLFCFLSAYPF. Over 36–55 the chain is Cytoplasmic; it reads AGILKRLPSAPWIRNLFSIS. Residues 56-76 form a helical membrane-spanning segment; sequence IGLFYLIGVHHLYDGVLVLLF. Topologically, residues 77–94 are lumenal; the sequence is DALFTYFVAAFYRSSRMP. A helical transmembrane segment spans residues 95–115; that stretch reads WIIFIVILGHTFSSHVIRYIY. Residues 116–223 lie on the Cytoplasmic side of the membrane; it reads PSENTDITAS…LEPALGRCWR (108 aa). Residues 224–244 form a helical membrane-spanning segment; that stretch reads GLLWLILFITGSSIYPLKFLL. At 245–246 the chain is on the lumenal side; the sequence is TP. Residues 247-267 traverse the membrane as a helical segment; the sequence is KFASSPILLKYGYVCITAFVA. Residues 268 to 410 lie on the Cytoplasmic side of the membrane; sequence RMKYYGAWEL…TPGPFKRVYD (143 aa). The active site involves His-363. The helical transmembrane segment at 411 to 431 threads the bilayer; the sequence is VIGMVATNLSLSYLIISFLLL. Residues 432 to 441 are Lumenal-facing; the sequence is NLKESIHVWK. Residues 442–462 traverse the membrane as a helical segment; sequence ELYFIVHIYILIALAVFNSPI. Residues 463-509 lie on the Cytoplasmic side of the membrane; sequence RSKLDNKIRSRVNSYKLKSYEQSMKSTSDTDMLNMSVPKREDFENDE. The disordered stretch occupies residues 488–509; it reads STSDTDMLNMSVPKREDFENDE. Residue Ser-490 is modified to Phosphoserine. Residues 500–509 show a composition bias toward basic and acidic residues; the sequence is PKREDFENDE.

It belongs to the membrane-bound acyltransferase family.

The protein localises to the endoplasmic reticulum membrane. The protein resides in the microsome membrane. The catalysed reaction is a 1-acyl-sn-glycero-3-phosphate + an acyl-CoA = a 1,2-diacyl-sn-glycero-3-phosphate + CoA. It carries out the reaction a 1-acyl-sn-glycero-3-phosphocholine + an acyl-CoA = a 1,2-diacyl-sn-glycero-3-phosphocholine + CoA. It catalyses the reaction a 1-acyl-sn-glycero-3-phosphoethanolamine + an acyl-CoA = a 1,2-diacyl-sn-glycero-3-phosphoethanolamine + CoA. Functionally, membrane-bound O-acyltransferase that mediates the incorporation of unsaturated acyl chains into the sn-2 position of phospholipids. This chain is Lysophospholipid acyltransferase (ale1), found in Schizosaccharomyces pombe (strain 972 / ATCC 24843) (Fission yeast).